The following is a 529-amino-acid chain: Arginine--tRNA ligase (529 aa).

The 'HIGH' region signature appears at 113-123 (ANPTGPLHIGH).

This sequence belongs to the class-I aminoacyl-tRNA synthetase family. As to quaternary structure, monomer.

Its subcellular location is the cytoplasm. It catalyses the reaction tRNA(Arg) + L-arginine + ATP = L-arginyl-tRNA(Arg) + AMP + diphosphate. The chain is Arginine--tRNA ligase from Campylobacter curvus (strain 525.92).